Consider the following 231-residue polypeptide: Ribosomal RNA small subunit methyltransferase nep-1 (231 aa).

S-adenosyl-L-methionine contacts are provided by residues Met161, Gly188, Gly193, and Ile206–Leu211.

It belongs to the class IV-like SAM-binding methyltransferase superfamily. RNA methyltransferase NEP1 family. Homodimer.

The protein localises to the nucleus. Its subcellular location is the nucleolus. The catalysed reaction is a pseudouridine in rRNA + S-adenosyl-L-methionine = an N(1)-methylpseudouridine in rRNA + S-adenosyl-L-homocysteine + H(+). Its function is as follows. S-adenosyl-L-methionine-dependent pseudouridine N(1)-methyltransferase that methylates a pseudouridine in 18S rRNA. Involved the biosynthesis of the hypermodified N1-methyl-N3-(3-amino-3-carboxypropyl) pseudouridine (m1acp3-Psi) conserved in eukaryotic 18S rRNA. Also has an essential role in 40S ribosomal subunit biogenesis independent on its methyltransferase activity, facilitating the incorporation of ribosomal protein S19 during the formation of pre-ribosomes. The protein is Ribosomal RNA small subunit methyltransferase nep-1 of Caenorhabditis elegans.